We begin with the raw amino-acid sequence, 459 residues long: Argininosuccinate lyase (459 aa).

The protein belongs to the lyase 1 family. Argininosuccinate lyase subfamily.

It localises to the cytoplasm. The enzyme catalyses 2-(N(omega)-L-arginino)succinate = fumarate + L-arginine. It participates in amino-acid biosynthesis; L-arginine biosynthesis; L-arginine from L-ornithine and carbamoyl phosphate: step 3/3. The sequence is that of Argininosuccinate lyase from Ruminiclostridium cellulolyticum (strain ATCC 35319 / DSM 5812 / JCM 6584 / H10) (Clostridium cellulolyticum).